Reading from the N-terminus, the 598-residue chain is Elongation factor 4 (598 aa).

A tr-type G domain is found at 2–184 (NRIRNFSIIA…TIVAKLPPPK (183 aa)). Residues 14 to 19 (DHGKST) and 131 to 134 (NKID) each bind GTP.

It belongs to the TRAFAC class translation factor GTPase superfamily. Classic translation factor GTPase family. LepA subfamily.

The protein resides in the cell inner membrane. The enzyme catalyses GTP + H2O = GDP + phosphate + H(+). Functionally, required for accurate and efficient protein synthesis under certain stress conditions. May act as a fidelity factor of the translation reaction, by catalyzing a one-codon backward translocation of tRNAs on improperly translocated ribosomes. Back-translocation proceeds from a post-translocation (POST) complex to a pre-translocation (PRE) complex, thus giving elongation factor G a second chance to translocate the tRNAs correctly. Binds to ribosomes in a GTP-dependent manner. In Desulfosudis oleivorans (strain DSM 6200 / JCM 39069 / Hxd3) (Desulfococcus oleovorans), this protein is Elongation factor 4.